Here is a 337-residue protein sequence, read N- to C-terminus: Ornithine carbamoyltransferase (337 aa).

Carbamoyl phosphate-binding positions include 57-60, Q84, R108, and 135-138; these read STRT and HPTQ. L-ornithine-binding positions include N167, D231, and 235–236; that span reads SM. Residues 272–273 and R317 contribute to the carbamoyl phosphate site; that span reads CL.

This sequence belongs to the aspartate/ornithine carbamoyltransferase superfamily. OTCase family.

The protein resides in the cytoplasm. It carries out the reaction carbamoyl phosphate + L-ornithine = L-citrulline + phosphate + H(+). Its pathway is amino-acid degradation; L-arginine degradation via ADI pathway; carbamoyl phosphate from L-arginine: step 2/2. Its function is as follows. Reversibly catalyzes the transfer of the carbamoyl group from carbamoyl phosphate (CP) to the N(epsilon) atom of ornithine (ORN) to produce L-citrulline. The sequence is that of Ornithine carbamoyltransferase from Streptococcus uberis (strain ATCC BAA-854 / 0140J).